A 388-amino-acid chain; its full sequence is uncharacterized protein (388 aa).

The protein belongs to the glycosyltransferase 28 family.

This is an uncharacterized protein from Methanosarcina acetivorans (strain ATCC 35395 / DSM 2834 / JCM 12185 / C2A).